The chain runs to 91 residues: Signal recognition particle 19 kDa protein (91 aa).

This sequence belongs to the SRP19 family. As to quaternary structure, part of the signal recognition particle protein translocation system, which is composed of SRP and FtsY. Archaeal SRP consists of a 7S RNA molecule of 300 nucleotides and two protein subunits: SRP54 and SRP19.

Its subcellular location is the cytoplasm. Involved in targeting and insertion of nascent membrane proteins into the cytoplasmic membrane. Binds directly to 7S RNA and mediates binding of the 54 kDa subunit of the SRP. The sequence is that of Signal recognition particle 19 kDa protein from Methanoregula boonei (strain DSM 21154 / JCM 14090 / 6A8).